The sequence spans 398 residues: Elongation factor Tu (398 aa).

One can recognise a tr-type G domain in the interval 10–207 (KPHVNIGTIG…TVDSYIPEPE (198 aa)). Positions 19-26 (GHVDHGKT) are G1. 19–26 (GHVDHGKT) contributes to the GTP binding site. Residue T26 coordinates Mg(2+). The tract at residues 63 to 67 (GITIN) is G2. The segment at 84–87 (DAPG) is G3. GTP contacts are provided by residues 84-88 (DAPGH) and 139-142 (NKVD). Residues 139-142 (NKVD) are G4. Residues 177-179 (SAL) are G5.

Belongs to the TRAFAC class translation factor GTPase superfamily. Classic translation factor GTPase family. EF-Tu/EF-1A subfamily. Monomer.

It is found in the cytoplasm. The catalysed reaction is GTP + H2O = GDP + phosphate + H(+). Its function is as follows. GTP hydrolase that promotes the GTP-dependent binding of aminoacyl-tRNA to the A-site of ribosomes during protein biosynthesis. The polypeptide is Elongation factor Tu (Streptococcus pyogenes serotype M28 (strain MGAS6180)).